A 130-amino-acid chain; its full sequence is MMRQSLQAVLPEISGNKTSSLRKSVCSDLLTLFNSPHSALPSLLVSGMPEWQVHNPSDKHLQSWYCRQLRSALLFHEPRIAALQVNLKEAYCHTLAISLEIMLYHDDEPLTFDLVWDNGGWRSATLENVS.

This sequence belongs to the GpW/Gp25 family. IraD subfamily. In terms of assembly, interacts with RssB.

It localises to the cytoplasm. Its function is as follows. Inhibits RpoS proteolysis by regulating RssB activity, thereby increasing the stability of the sigma stress factor RpoS during oxidative stress. Its effect on RpoS stability is due to its interaction with RssB, which probably blocks the interaction of RssB with RpoS, and the consequent delivery of the RssB-RpoS complex to the ClpXP protein degradation pathway. In Escherichia coli (strain K12 / MC4100 / BW2952), this protein is Anti-adapter protein IraD.